The primary structure comprises 252 residues: MKRAVGYGLLFSTVLMTSVVVHLPAQVALSPLPLPEGLELTGIEGTLWQGQAAQVRWQGMSLGDLNWDLHLSALLLGQLEADIRFGRGSSTQLRGKGVVGVGLSGPYADDFLLSLPAAQAITWLPLPVPLMAQGQLEMAVKQYRFGEPYCQQAEGSLAWSAAQLESPIGALQLGTVVSDFTCQESVVTLKGGQKTAQVSSEFNLSLQPDNRYQAQAWFKPEAEFPESLKEQLSWLPQPDGQGRYPFNQQGQL.

At 1–4 (MKRA) the chain is on the cytoplasmic side. Residues 5–25 (VGYGLLFSTVLMTSVVVHLPA) traverse the membrane as a helical segment. At 26–252 (QVALSPLPLP…RYPFNQQGQL (227 aa)) the chain is on the periplasmic side.

This sequence belongs to the GSP N family.

The protein resides in the cell inner membrane. Involved in a type II secretion system (T2SS, formerly general secretion pathway, GSP) for the export of proteins. Required for secretion of cholera toxin through the outer membrane. This chain is Type II secretion system protein N (epsN), found in Vibrio cholerae serotype O1 (strain ATCC 39315 / El Tor Inaba N16961).